The following is a 297-amino-acid chain: HTH-type transcriptional regulator ArgP (297 aa).

In terms of domain architecture, HTH lysR-type spans 4–60 (PDYRTLQALDAVIRERGFERAAQKLCITQSAVSQRIKQLENLFGQPLLVRTIPPRPT). The segment at residues 21–40 (FERAAQKLCITQSAVSQRIK) is a DNA-binding region (H-T-H motif).

The protein belongs to the LysR transcriptional regulatory family. As to quaternary structure, homodimer.

In terms of biological role, controls the transcription of genes involved in arginine and lysine metabolism. The chain is HTH-type transcriptional regulator ArgP from Pectobacterium atrosepticum (strain SCRI 1043 / ATCC BAA-672) (Erwinia carotovora subsp. atroseptica).